A 185-amino-acid polypeptide reads, in one-letter code: Peptidyl-tRNA hydrolase (185 aa).

TRNA is bound at residue Tyr-14. The active-site Proton acceptor is the His-19. TRNA is bound by residues Tyr-65, Asn-67, and Asn-113.

Belongs to the PTH family. In terms of assembly, monomer.

It is found in the cytoplasm. The enzyme catalyses an N-acyl-L-alpha-aminoacyl-tRNA + H2O = an N-acyl-L-amino acid + a tRNA + H(+). Functionally, hydrolyzes ribosome-free peptidyl-tRNAs (with 1 or more amino acids incorporated), which drop off the ribosome during protein synthesis, or as a result of ribosome stalling. In terms of biological role, catalyzes the release of premature peptidyl moieties from peptidyl-tRNA molecules trapped in stalled 50S ribosomal subunits, and thus maintains levels of free tRNAs and 50S ribosomes. The sequence is that of Peptidyl-tRNA hydrolase from Rickettsia felis (strain ATCC VR-1525 / URRWXCal2) (Rickettsia azadi).